Reading from the N-terminus, the 310-residue chain is UDP-N-acetylenolpyruvoylglucosamine reductase (310 aa).

One can recognise an FAD-binding PCMH-type domain in the interval 31–216 (KIGGPADYFV…LRKIEELNQA (186 aa)). Arg-180 is a catalytic residue. Residue Ser-230 is the Proton donor of the active site. Glu-300 is an active-site residue.

This sequence belongs to the MurB family. FAD is required as a cofactor.

It localises to the cytoplasm. It catalyses the reaction UDP-N-acetyl-alpha-D-muramate + NADP(+) = UDP-N-acetyl-3-O-(1-carboxyvinyl)-alpha-D-glucosamine + NADPH + H(+). The protein operates within cell wall biogenesis; peptidoglycan biosynthesis. Its function is as follows. Cell wall formation. This chain is UDP-N-acetylenolpyruvoylglucosamine reductase, found in Lachnoclostridium phytofermentans (strain ATCC 700394 / DSM 18823 / ISDg) (Clostridium phytofermentans).